The primary structure comprises 160 residues: Archaemetzincin (160 aa).

Zn(2+) is bound at residue histidine 117. The active-site Proton acceptor is the glutamate 118. Residues histidine 121, histidine 127, cysteine 128, cysteine 132, cysteine 151, and cysteine 154 each contribute to the Zn(2+) site.

This sequence belongs to the peptidase M54 family. In terms of assembly, monomer. The cofactor is Zn(2+).

Probable zinc metalloprotease whose natural substrate is unknown. In Archaeoglobus fulgidus (strain ATCC 49558 / DSM 4304 / JCM 9628 / NBRC 100126 / VC-16), this protein is Archaemetzincin.